The sequence spans 179 residues: uncharacterized protein (179 aa).

Its subcellular location is the plastid. It is found in the cyanelle. This is an uncharacterized protein from Cyanophora paradoxa.